The sequence spans 62 residues: UPF0370 protein plu2724 (62 aa).

The chain crosses the membrane as a helical span at residues 3-23 (WLADYWWIILILLVGVLLNAI). The interval 36 to 62 (DNKPELPPHRDLNSKWDDEDDWPQKKP) is disordered.

The protein belongs to the UPF0370 family.

It is found in the cell membrane. In Photorhabdus laumondii subsp. laumondii (strain DSM 15139 / CIP 105565 / TT01) (Photorhabdus luminescens subsp. laumondii), this protein is UPF0370 protein plu2724.